A 402-amino-acid polypeptide reads, in one-letter code: Shaggy-related protein kinase GSK2 (402 aa).

The disordered stretch occupies residues 1 to 38; the sequence is MDQPAPAPEPMLLDAQPPAAVACDKKQQEGEAPYAEGN. The Protein kinase domain occupies 63–347; it reads YMAERVVGTG…ALDACAHPFF (285 aa). ATP is bound by residues 69 to 77 and Lys-92; that span reads VGTGSFGIV. The active-site Proton acceptor is Asp-188.

Belongs to the protein kinase superfamily. CMGC Ser/Thr protein kinase family. GSK-3 subfamily. As to quaternary structure, interacts with DLT. Interacts with OFP8. Interacts with GRF4. Interacts with PUB24. Interacts with SMOS1. Post-translationally, autophosphorylated. In terms of tissue distribution, expressed in lamina joints, vascular tissue and nodes.

It is found in the cytoplasm. The protein localises to the nucleus. It carries out the reaction L-seryl-[protein] + ATP = O-phospho-L-seryl-[protein] + ADP + H(+). The catalysed reaction is L-threonyl-[protein] + ATP = O-phospho-L-threonyl-[protein] + ADP + H(+). In terms of biological role, serine-threonine kinase that acts as a negative regulator of brassinosteroid (BR) signaling. Phosphorylates DLT and BZR1, two positive regulators that mediates several BR responses. Phosphorylation of DLT and BZR1 inhibits their activities in BR signaling. Phosphorylates OFP8, a positive regulator of BR responses. Phosphorylated OFP8 shuttles from the nucleus to the cytoplasm where it is degraded by the proteasome. Phosphorylates the E3 ubiquitin-protein ligase PUB24, a negative regulator of BR signaling, which targets BZR1 and promotes its degradation via the 26S proteasome. Phosphorylation of PUB24 increases its stability. Phosphorylates the AP2-ERF transcription factor SMOS1, a positive regulator of BR signaling, which cooperatively functions in a transactivating complex with BZR1 to enhance the transcription of BR biosynthetic genes. Phosphorylation of SMOS1 leads to its degradation by an unknown mechanism. This chain is Shaggy-related protein kinase GSK2, found in Oryza sativa subsp. japonica (Rice).